We begin with the raw amino-acid sequence, 649 residues long: MMGSKREEERNEKIIRGLMKLPPNRRCINCNSLGPQYVCTTFWTFVCMACSGIHREFTHRVKSVSMSKFTSKEVEVLQNGGNQRAREIYLKNWDHQRQRLPENSNAERVREFIKNVYVQKKYAGANDADKPSKDSQDHVSSEDMTRRANSYHSYSQSPPYDYQYEERRYGKIPLGFTGKSASVKGLHAKASSFVYSPGRFSDHMFEDQFSNEDSAPRASDYSVSSAGDPFRSDIQSPNFQQEAEFRSPQFQHSNAPPSENLFPGRQHQRTTSSGSVRSVDSNFMSIKSYTSGGLGEAVSESRQNTGSQQGKTSNHVPLVAESTKAPIDLFQLPGAPVAQSVDTFQPSIAPRSPPVNLQQAPQTYSFTPANSFAGNLGQQPTSRPSELSAPKNEGWASFDNPMPAAKSTNVITSPGDFQLELKIEEILQPSTSMQLPPYPSTVDQHALSIPSPWQEDLSNVLKDVVDNPQPWNAFPDSIEANPLDSSRNIHQQVDGASTSSYNTDHQHLESQVLEELSNDGTQTTRIPAGSSAFGFPGNIGMAPSYSEEAWQHVNEQKSANPFDLPYDSEFDSNDMFLDMSSLQGALPDIQTPQAFLNGVSQPWLAADSVPSYLPAPAVAQGGLAYMAGQASTNSAAQGPVAFTGGNPFA.

Residues 12-130 enclose the Arf-GAP domain; it reads EKIIRGLMKL…KYAGANDADK (119 aa). The C4-type zinc-finger motif lies at 27–50; it reads CINCNSLGPQYVCTTFWTFVCMAC. 4 disordered regions span residues 124–159, 209–279, 294–316, and 366–391; these read GANDADKPSKDSQDHVSSEDMTRRANSYHSYSQSPP, FSNE…VRSV, LGEAVSESRQNTGSQQGKTSNHV, and FTPANSFAGNLGQQPTSRPSELSAPK. Basic and acidic residues predominate over residues 127 to 146; the sequence is DADKPSKDSQDHVSSEDMTR. Over residues 150 to 159 the composition is skewed to low complexity; that stretch reads SYHSYSQSPP. Polar residues-rich tracts occupy residues 248-257, 269-279, 300-315, and 366-385; these read PQFQHSNAPP, RTTSSGSVRSV, ESRQNTGSQQGKTSNH, and FTPANSFAGNLGQQPTSRPS.

GTPase-activating protein (GAP) for ADP ribosylation factor (ARF). The polypeptide is Probable ADP-ribosylation factor GTPase-activating protein AGD14 (AGD14) (Arabidopsis thaliana (Mouse-ear cress)).